Consider the following 462-residue polypeptide: Beta-glucosidase 1A (462 aa).

Residues Q20, H123, and N169 each coordinate substrate. Residue E170 is the Proton donor of the active site. Residue Y301 coordinates substrate. E365 functions as the Nucleophile in the catalytic mechanism. Residues W415 and 422–423 each bind substrate; that span reads EW.

The protein belongs to the glycosyl hydrolase 1 family.

It carries out the reaction Hydrolysis of terminal, non-reducing beta-D-glucosyl residues with release of beta-D-glucose.. Its function is as follows. Plays an important role in cellulose degradation. Shows hydrolytic activity against several glycosidic compounds. In Phanerodontia chrysosporium (White-rot fungus), this protein is Beta-glucosidase 1A.